Consider the following 423-residue polypeptide: D-tagatose-1,6-bisphosphate aldolase subunit GatZ (423 aa).

The protein belongs to the GatZ/KbaZ family. GatZ subfamily. As to quaternary structure, forms a complex with GatY.

It functions in the pathway carbohydrate metabolism; D-tagatose 6-phosphate degradation; D-glyceraldehyde 3-phosphate and glycerone phosphate from D-tagatose 6-phosphate: step 2/2. Component of the tagatose-1,6-bisphosphate aldolase GatYZ that is required for full activity and stability of the Y subunit. Could have a chaperone-like function for the proper and stable folding of GatY. When expressed alone, GatZ does not show any aldolase activity. Is involved in the catabolism of galactitol. This chain is D-tagatose-1,6-bisphosphate aldolase subunit GatZ, found in Salmonella heidelberg (strain SL476).